The primary structure comprises 429 residues: D-amino acid dehydrogenase (429 aa).

3–17 (VLILGSGVIGVTSAW) is an FAD binding site.

This sequence belongs to the DadA oxidoreductase family. Requires FAD as cofactor.

It carries out the reaction a D-alpha-amino acid + A + H2O = a 2-oxocarboxylate + AH2 + NH4(+). Functionally, oxidative deamination of D-amino acids. The polypeptide is D-amino acid dehydrogenase (Xanthomonas axonopodis pv. citri (strain 306)).